The sequence spans 201 residues: Recombination protein RecR (201 aa).

Residues 57–72 form a C4-type zinc finger; the sequence is CADCRTFTEQPVCTIC. Residues 81–176 form the Toprim domain; sequence GQICVVESPA…MASRIAHGVP (96 aa).

This sequence belongs to the RecR family.

Its function is as follows. May play a role in DNA repair. It seems to be involved in an RecBC-independent recombinational process of DNA repair. It may act with RecF and RecO. This chain is Recombination protein RecR, found in Sodalis glossinidius (strain morsitans).